The sequence spans 348 residues: Anthranilate phosphoribosyltransferase (348 aa).

5-phospho-alpha-D-ribose 1-diphosphate contacts are provided by residues glycine 91, 94–95 (GD), threonine 99, 101–104 (NIST), 119–127 (KHGNRSASG), and serine 131. Glycine 91 is an anthranilate binding site. Serine 103 is a binding site for Mg(2+). Residue asparagine 122 participates in anthranilate binding. Arginine 177 is an anthranilate binding site. Positions 236 and 237 each coordinate Mg(2+).

The protein belongs to the anthranilate phosphoribosyltransferase family. As to quaternary structure, homodimer. Mg(2+) serves as cofactor.

The enzyme catalyses N-(5-phospho-beta-D-ribosyl)anthranilate + diphosphate = 5-phospho-alpha-D-ribose 1-diphosphate + anthranilate. The protein operates within amino-acid biosynthesis; L-tryptophan biosynthesis; L-tryptophan from chorismate: step 2/5. In terms of biological role, catalyzes the transfer of the phosphoribosyl group of 5-phosphorylribose-1-pyrophosphate (PRPP) to anthranilate to yield N-(5'-phosphoribosyl)-anthranilate (PRA). The sequence is that of Anthranilate phosphoribosyltransferase from Synechococcus sp. (strain ATCC 27144 / PCC 6301 / SAUG 1402/1) (Anacystis nidulans).